A 380-amino-acid chain; its full sequence is Cytochrome b (380 aa).

A run of 4 helical transmembrane segments spans residues 34-54 (FGSL…LLAM), 78-99 (WLIR…YLHI), 114-134 (WNVG…GYVL), and 179-199 (FFAL…VHLT). Heme b contacts are provided by His84 and His98. Heme b-binding residues include His183 and His197. His202 is a binding site for a ubiquinone. Transmembrane regions (helical) follow at residues 227-247 (IKDI…ALFS), 289-309 (LGGV…PLLH), 321-341 (LSQI…WIGS), and 348-368 (FIII…VLFP).

This sequence belongs to the cytochrome b family. As to quaternary structure, the cytochrome bc1 complex contains 11 subunits: 3 respiratory subunits (MT-CYB, CYC1 and UQCRFS1), 2 core proteins (UQCRC1 and UQCRC2) and 6 low-molecular weight proteins (UQCRH/QCR6, UQCRB/QCR7, UQCRQ/QCR8, UQCR10/QCR9, UQCR11/QCR10 and a cleavage product of UQCRFS1). This cytochrome bc1 complex then forms a dimer. The cofactor is heme b.

It localises to the mitochondrion inner membrane. In terms of biological role, component of the ubiquinol-cytochrome c reductase complex (complex III or cytochrome b-c1 complex) that is part of the mitochondrial respiratory chain. The b-c1 complex mediates electron transfer from ubiquinol to cytochrome c. Contributes to the generation of a proton gradient across the mitochondrial membrane that is then used for ATP synthesis. The chain is Cytochrome b (MT-CYB) from Vireo olivaceus (Red-eyed vireo).